A 469-amino-acid polypeptide reads, in one-letter code: Cytochrome P450 85A1 (469 aa).

Residues 1–21 (MVLVAIGVVVAAAVVVSSLLL) traverse the membrane as a helical segment. A heme-binding site is contributed by Cys-419.

It belongs to the cytochrome P450 family. Heme serves as cofactor. As to expression, expressed at low levels in all the tissues, but preferentially in the leaf sheath.

It is found in the membrane. The enzyme catalyses 6-deoxoteasterone + reduced [NADPH--hemoprotein reductase] + O2 = 6alpha-hydroxyteasterone + oxidized [NADPH--hemoprotein reductase] + H2O + H(+). The catalysed reaction is 6alpha-hydroxytyphasterol + reduced [NADPH--hemoprotein reductase] + O2 = teasterone + oxidized [NADPH--hemoprotein reductase] + 2 H2O + H(+). It catalyses the reaction 3-dehydro-6-deoxoteasterone + reduced [NADPH--hemoprotein reductase] + O2 = 3-dehydro-6alpha-hydroxyteasterone + oxidized [NADPH--hemoprotein reductase] + H2O + H(+). It carries out the reaction 3-dehydro-6alpha-hydroxyteasterone + reduced [NADPH--hemoprotein reductase] + O2 = 3-dehydroteasterone + oxidized [NADPH--hemoprotein reductase] + 2 H2O + H(+). The enzyme catalyses 6-deoxotyphasterol + reduced [NADPH--hemoprotein reductase] + O2 = 6alpha-hydroxytyphasterol + oxidized [NADPH--hemoprotein reductase] + H2O + H(+). The catalysed reaction is 6alpha-hydroxytyphasterol + reduced [NADPH--hemoprotein reductase] + O2 = typhasterol + oxidized [NADPH--hemoprotein reductase] + 2 H2O + H(+). It catalyses the reaction 3-dehydro-6-deoxoteasterone + 2 reduced [NADPH--hemoprotein reductase] + 2 O2 = 3-dehydroteasterone + 2 oxidized [NADPH--hemoprotein reductase] + 3 H2O + 2 H(+). It carries out the reaction 6-deoxoteasterone + 2 reduced [NADPH--hemoprotein reductase] + 2 O2 = teasterone + 2 oxidized [NADPH--hemoprotein reductase] + 3 H2O + 2 H(+). The enzyme catalyses 6-deoxotyphasterol + 2 reduced [NADPH--hemoprotein reductase] + 2 O2 = typhasterol + 2 oxidized [NADPH--hemoprotein reductase] + 3 H2O + 2 H(+). It functions in the pathway plant hormone biosynthesis; brassinosteroid biosynthesis. Functionally, catalyzes the C6-oxidation step in brassinosteroids biosynthesis. May convert 6-deoxoteasterone (6-deoxoTE) to teasterone (TE), 3-dehydro-6-deoxoteasterone (6-deoxo3DT, 6-deoxo3DHT) to 3-dehydroteasterone (3DT, 3-DHT), and 6-deoxotyphasterol (6-deoxoTY) to typhasterol (TY). Involved in the organization and elongation of the leaf and stem cells. Not able to convert 6-deoxocastasterone (6-deoxoCS) and castasterone (CS) to brassinolide (BL). This is Cytochrome P450 85A1 from Oryza sativa subsp. japonica (Rice).